Reading from the N-terminus, the 119-residue chain is Holo-[acyl-carrier-protein] synthase (119 aa).

Positions 8 and 58 each coordinate Mg(2+).

It belongs to the P-Pant transferase superfamily. AcpS family. It depends on Mg(2+) as a cofactor.

The protein localises to the cytoplasm. The enzyme catalyses apo-[ACP] + CoA = holo-[ACP] + adenosine 3',5'-bisphosphate + H(+). Functionally, transfers the 4'-phosphopantetheine moiety from coenzyme A to a Ser of acyl-carrier-protein. The protein is Holo-[acyl-carrier-protein] synthase of Limosilactobacillus fermentum (strain NBRC 3956 / LMG 18251) (Lactobacillus fermentum).